Consider the following 258-residue polypeptide: Transcription factor ORG3 (258 aa).

The bHLH domain maps to 76 to 128 (VKKLNHNASERDRRRKINSLFSSLRSCLPASGQSKKLSIPATVSRSLKYIPEL).

In terms of assembly, homodimer. In terms of tissue distribution, expressed in vascular tissues. Detected in roots.

Its subcellular location is the nucleus. This chain is Transcription factor ORG3 (ORG3), found in Arabidopsis thaliana (Mouse-ear cress).